A 220-amino-acid chain; its full sequence is MCVFCEKKLFMHAIGLSGYSIREIVSSLDQPVSNSLVRNKGFVGKILELILGVNVLHGYKCIDFPSLGIELKSIPINSSGYPLEPTFICNIPLKNNSLNITWNNSYFYRKIKKILWIPIIGNRVVSFLDKIVGEAFIWTMSSVQEKILKKDWEEFMDLIIIGKVEYISSKHGQVLQVKKKCKNKHVCIKFINYNGCVKFTNPRAFYFRKSFTWSLLNLSK.

This sequence belongs to the MutH family.

It is found in the cytoplasm. In terms of biological role, sequence-specific endonuclease that cleaves unmethylated GATC sequences. It is involved in DNA mismatch repair. This is DNA mismatch repair protein MutH from Buchnera aphidicola subsp. Baizongia pistaciae (strain Bp).